The primary structure comprises 147 residues: Cyanate hydratase (147 aa).

Residues arginine 88, glutamate 91, and serine 114 contribute to the active site.

This sequence belongs to the cyanase family.

It catalyses the reaction cyanate + hydrogencarbonate + 3 H(+) = NH4(+) + 2 CO2. In terms of biological role, catalyzes the reaction of cyanate with bicarbonate to produce ammonia and carbon dioxide. This is Cyanate hydratase from Variovorax paradoxus (strain S110).